A 342-amino-acid chain; its full sequence is uncharacterized protein (342 aa).

The protein belongs to the cycloisomerase 2 family.

This is an uncharacterized protein from Staphylococcus aureus (strain NCTC 8325 / PS 47).